Reading from the N-terminus, the 848-residue chain is Paramyosin (848 aa).

The segment at Ala-1 to Asp-9 is nonhelical region. Residues Leu-10 to Ser-833 are a coiled coil. Residues Val-834–Leu-848 are nonhelical region.

It belongs to the paramyosin family. As to quaternary structure, homodimer.

It localises to the cytoplasm. The protein localises to the myofibril. Functionally, paramyosin is a major structural component of many thick filaments isolated from invertebrate muscles. The sequence is that of Paramyosin from Dirofilaria immitis (Canine heartworm).